We begin with the raw amino-acid sequence, 614 residues long: Autophagy-related protein 22-1 (614 aa).

Residues 1–29 (MQNCTNSPEDQAASVCPPPPQFPGDDTRP) form a disordered region. The N-linked (GlcNAc...) asparagine glycan is linked to Asn3. The next 4 helical transmembrane spans lie at 41 to 61 (YGWA…PITL), 126 to 146 (TASF…ILII), 160 to 180 (MLLV…LAVV), and 185 to 205 (LLGG…FVLL). Residues 229-254 (PTGTSHDSTSTADGPGQTDGTETTSL) form a disordered region. Residues 230-254 (TGTSHDSTSTADGPGQTDGTETTSL) are compositionally biased toward polar residues. 8 consecutive transmembrane segments (helical) span residues 291 to 311 (GIGI…LVVV), 322 to 342 (LVLF…AMWL), 383 to 403 (ILLF…VSGT), 417 to 437 (AALG…AFSW), 452 to 472 (IVAC…GFIP), 486 to 506 (WEMY…SSYC), 523 to 545 (YALY…GIIT), and 554 to 574 (AFVF…LVDV).

Belongs to the ATG22 family.

It is found in the vacuole membrane. Functionally, vacuolar effluxer which mediate the efflux of amino acids resulting from autophagic degradation. The release of autophagic amino acids allows the maintenance of protein synthesis and viability during nitrogen starvation. This chain is Autophagy-related protein 22-1 (atg22-1), found in Aspergillus niger (strain ATCC MYA-4892 / CBS 513.88 / FGSC A1513).